The primary structure comprises 491 residues: UDP-N-acetylmuramate--L-alanine ligase (491 aa).

An ATP-binding site is contributed by 126–132; it reads GTHGKTT.

It belongs to the MurCDEF family.

Its subcellular location is the cytoplasm. The enzyme catalyses UDP-N-acetyl-alpha-D-muramate + L-alanine + ATP = UDP-N-acetyl-alpha-D-muramoyl-L-alanine + ADP + phosphate + H(+). The protein operates within cell wall biogenesis; peptidoglycan biosynthesis. In terms of biological role, cell wall formation. The polypeptide is UDP-N-acetylmuramate--L-alanine ligase (Enterobacter sp. (strain 638)).